The chain runs to 227 residues: Enolase-phosphatase E1 (227 aa).

Residues Asp11 and Glu13 each coordinate Mg(2+). Residues 118-119 (SS) and Lys161 contribute to the substrate site. Residue Asp186 participates in Mg(2+) binding.

Belongs to the HAD-like hydrolase superfamily. MasA/MtnC family. In terms of assembly, monomer. The cofactor is Mg(2+).

The protein localises to the cytoplasm. It is found in the nucleus. The catalysed reaction is 5-methylsulfanyl-2,3-dioxopentyl phosphate + H2O = 1,2-dihydroxy-5-(methylsulfanyl)pent-1-en-3-one + phosphate. It participates in amino-acid biosynthesis; L-methionine biosynthesis via salvage pathway; L-methionine from S-methyl-5-thio-alpha-D-ribose 1-phosphate: step 3/6. The protein operates within amino-acid biosynthesis; L-methionine biosynthesis via salvage pathway; L-methionine from S-methyl-5-thio-alpha-D-ribose 1-phosphate: step 4/6. Its function is as follows. Bifunctional enzyme that catalyzes the enolization of 2,3-diketo-5-methylthiopentyl-1-phosphate (DK-MTP-1-P) into the intermediate 2-hydroxy-3-keto-5-methylthiopentenyl-1-phosphate (HK-MTPenyl-1-P), which is then dephosphorylated to form the acireductone 1,2-dihydroxy-3-keto-5-methylthiopentene (DHK-MTPene). The polypeptide is Enolase-phosphatase E1 (Saccharomyces cerevisiae (strain JAY291) (Baker's yeast)).